A 377-amino-acid polypeptide reads, in one-letter code: MESAIAKTGPITALGAMSGTSLDGVDAAIVVTDGVAIDGFGASAYEPYSDAQRAVLAKALGQWQGADVEAATGVIEQVHRTVLARFQQARLIGFHGQTLAHAPHTQGTLQVGDGAWLATALDRPVIWDFRTRDVEMGGEGAPLAPFFHFACAKYIGATQPLAFLNLGGVGNLTYVDPSFARPEEVGALLAFDTGPANAPVNDLVQARLGLAYDRDGQVAREGTVCQRVLERALTAPYFARIPPKSLDRNDFSQIVDLVDTLPDADAVATLTALSAAAVSQGVRHCPQVPQQVLVTGGGRKNPVLMEMLQSMLACPVKPVEDVGLDGDMLEAQAFAYLGVRVARGLPTSCPGTTGVRAPVGGGRISYPGTAAMAAQTG.

19 to 26 (GTSLDGVD) lines the ATP pocket.

This sequence belongs to the anhydro-N-acetylmuramic acid kinase family.

It carries out the reaction 1,6-anhydro-N-acetyl-beta-muramate + ATP + H2O = N-acetyl-D-muramate 6-phosphate + ADP + H(+). It participates in amino-sugar metabolism; 1,6-anhydro-N-acetylmuramate degradation. The protein operates within cell wall biogenesis; peptidoglycan recycling. Functionally, catalyzes the specific phosphorylation of 1,6-anhydro-N-acetylmuramic acid (anhMurNAc) with the simultaneous cleavage of the 1,6-anhydro ring, generating MurNAc-6-P. Is required for the utilization of anhMurNAc either imported from the medium or derived from its own cell wall murein, and thus plays a role in cell wall recycling. The chain is Anhydro-N-acetylmuramic acid kinase from Roseobacter denitrificans (strain ATCC 33942 / OCh 114) (Erythrobacter sp. (strain OCh 114)).